The sequence spans 453 residues: Ribulose bisphosphate carboxylase large chain (453 aa).

The propeptide occupies 1–2 (MS). Pro-3 is subject to N-acetylproline. Lys-14 carries the N6,N6,N6-trimethyllysine modification. Substrate contacts are provided by Asn-123 and Thr-173. Lys-175 acts as the Proton acceptor in catalysis. Lys-177 provides a ligand contact to substrate. 3 residues coordinate Mg(2+): Lys-201, Asp-203, and Glu-204. N6-carboxylysine is present on Lys-201. His-294 acts as the Proton acceptor in catalysis. Positions 295, 327, and 379 each coordinate substrate.

Belongs to the RuBisCO large chain family. Type I subfamily. In terms of assembly, heterohexadecamer of 8 large chains and 8 small chains; disulfide-linked. The disulfide link is formed within the large subunit homodimers. Mg(2+) is required as a cofactor. Post-translationally, the disulfide bond which can form in the large chain dimeric partners within the hexadecamer appears to be associated with oxidative stress and protein turnover.

Its subcellular location is the plastid. The protein resides in the chloroplast. It carries out the reaction 2 (2R)-3-phosphoglycerate + 2 H(+) = D-ribulose 1,5-bisphosphate + CO2 + H2O. The enzyme catalyses D-ribulose 1,5-bisphosphate + O2 = 2-phosphoglycolate + (2R)-3-phosphoglycerate + 2 H(+). In terms of biological role, ruBisCO catalyzes two reactions: the carboxylation of D-ribulose 1,5-bisphosphate, the primary event in carbon dioxide fixation, as well as the oxidative fragmentation of the pentose substrate in the photorespiration process. Both reactions occur simultaneously and in competition at the same active site. The protein is Ribulose bisphosphate carboxylase large chain of Galium lucidum.